Consider the following 99-residue polypeptide: Large ribosomal subunit protein bL21 (99 aa).

The protein belongs to the bacterial ribosomal protein bL21 family. As to quaternary structure, part of the 50S ribosomal subunit. Contacts protein L20.

This protein binds to 23S rRNA in the presence of protein L20. The polypeptide is Large ribosomal subunit protein bL21 (Neorickettsia sennetsu (strain ATCC VR-367 / Miyayama) (Ehrlichia sennetsu)).